Reading from the N-terminus, the 145-residue chain is Hemoglobin subunit beta-A (145 aa).

The 145-residue stretch at 1-145 (MLTAEEKAAV…VANALAHRYH (145 aa)) folds into the Globin domain. Residues histidine 62 and histidine 91 each contribute to the heme b site.

Belongs to the globin family. In terms of assembly, heterotetramer of two alpha chains and two beta chains. As to expression, red blood cells.

Involved in oxygen transport from the lung to the various peripheral tissues. This chain is Hemoglobin subunit beta-A, found in Capra hircus (Goat).